The sequence spans 74 residues: Male-specific sperm protein Mst84Db (74 aa).

This sequence belongs to the MST(3)CGP family. As to expression, testis.

This chain is Male-specific sperm protein Mst84Db (Mst84Db), found in Drosophila melanogaster (Fruit fly).